The sequence spans 66 residues: Large ribosomal subunit protein bL35 (66 aa).

The disordered stretch occupies residues 20–41 (GKVMSAQRGKRHGMIKRTKKQI). The span at 27-41 (RGKRHGMIKRTKKQI) shows a compositional bias: basic residues.

Belongs to the bacterial ribosomal protein bL35 family.

This chain is Large ribosomal subunit protein bL35, found in Rhodopseudomonas palustris (strain BisB5).